A 104-amino-acid chain; its full sequence is Phosphoribosyl-ATP pyrophosphatase (104 aa).

It belongs to the PRA-PH family.

It is found in the cytoplasm. It carries out the reaction 1-(5-phospho-beta-D-ribosyl)-ATP + H2O = 1-(5-phospho-beta-D-ribosyl)-5'-AMP + diphosphate + H(+). Its pathway is amino-acid biosynthesis; L-histidine biosynthesis; L-histidine from 5-phospho-alpha-D-ribose 1-diphosphate: step 2/9. The chain is Phosphoribosyl-ATP pyrophosphatase from Methanoregula boonei (strain DSM 21154 / JCM 14090 / 6A8).